The following is a 277-amino-acid chain: UBX domain-containing protein 8 (277 aa).

Position 1 (Met1) is a topological domain, cytoplasmic. A helical transmembrane segment spans residues 2–22 (ASRGVVGLFLLSALPLLCLEL). The Lumenal segment spans residues 23 to 33 (RRGIPSLGIKD). Residues 34-54 (LILLSGRIFLLLALLTLVISV) traverse the membrane as a helical segment. The Cytoplasmic segment spans residues 55–277 (TTSWFNSLKP…NVEEKEQSSQ (223 aa)). The disordered stretch occupies residues 64–89 (PSQGHLKEGEKENEKRRRLVRERQQE). A compositionally biased stretch (basic and acidic residues) spans 68–89 (HLKEGEKENEKRRRLVRERQQE). The UBX domain occupies 193 to 269 (TAEEVVTVAL…GITVDTVLNV (77 aa)).

As to quaternary structure, interacts with SYVN1 and VCP. In terms of tissue distribution, highly expressed in gonads. In testis, expressed in post-meiotic round spermatids, while in ovaries it is expressed in granulosa cells.

Its subcellular location is the endoplasmic reticulum membrane. Involved in endoplasmic reticulum-associated degradation (ERAD) for misfolded lumenal proteins, possibly by tethering VCP to the endoplasmic reticulum membrane. May play a role in reproduction. This is UBX domain-containing protein 8 (Ubxn8) from Mus musculus (Mouse).